The chain runs to 443 residues: ATP-dependent protease ATPase subunit HslU (443 aa).

Residues Ile-18, 60–65 (GVGKTE), Asp-256, Glu-321, and Arg-393 each bind ATP.

It belongs to the ClpX chaperone family. HslU subfamily. In terms of assembly, a double ring-shaped homohexamer of HslV is capped on each side by a ring-shaped HslU homohexamer. The assembly of the HslU/HslV complex is dependent on binding of ATP.

It is found in the cytoplasm. In terms of biological role, ATPase subunit of a proteasome-like degradation complex; this subunit has chaperone activity. The binding of ATP and its subsequent hydrolysis by HslU are essential for unfolding of protein substrates subsequently hydrolyzed by HslV. HslU recognizes the N-terminal part of its protein substrates and unfolds these before they are guided to HslV for hydrolysis. The sequence is that of ATP-dependent protease ATPase subunit HslU from Shigella boydii serotype 18 (strain CDC 3083-94 / BS512).